Here is a 300-residue protein sequence, read N- to C-terminus: Porphobilinogen deaminase (300 aa).

Cys-239 carries the post-translational modification S-(dipyrrolylmethanemethyl)cysteine.

Belongs to the HMBS family. In terms of assembly, monomer. Dipyrromethane serves as cofactor.

It carries out the reaction 4 porphobilinogen + H2O = hydroxymethylbilane + 4 NH4(+). Its pathway is porphyrin-containing compound metabolism; protoporphyrin-IX biosynthesis; coproporphyrinogen-III from 5-aminolevulinate: step 2/4. Functionally, tetrapolymerization of the monopyrrole PBG into the hydroxymethylbilane pre-uroporphyrinogen in several discrete steps. The sequence is that of Porphobilinogen deaminase from Francisella philomiragia subsp. philomiragia (strain ATCC 25017 / CCUG 19701 / FSC 153 / O#319-036).